We begin with the raw amino-acid sequence, 269 residues long: Dynein regulatory complex protein 8 (269 aa).

The interval 1–113 is disordered; that stretch reads MLGPGQVRLR…RTGKGLGYNS (113 aa). A compositionally biased stretch (low complexity) spans 54–76; sequence AQGSSSPGIQSGPSSRPGSPRGA. EF-hand domains lie at 150–185 and 228–263; these read EFHKKIKEAFEVFDHESNNTVDVREIGTIIRSLGCC and IPEDVLLRAFEVLDSAKRGFLTKDELIKYMTEEDGV.

This sequence belongs to the DRC8 family. In terms of assembly, component of the nexin-dynein regulatory complex (N-DRC).

It localises to the cytoplasm. Its subcellular location is the cytoskeleton. The protein localises to the flagellum axoneme. Functionally, component of the nexin-dynein regulatory complex (N-DRC), a key regulator of ciliary/flagellar motility which maintains the alignment and integrity of the distal axoneme and regulates microtubule sliding in motile axonemes. This chain is Dynein regulatory complex protein 8 (EFCAB2), found in Homo sapiens (Human).